We begin with the raw amino-acid sequence, 294 residues long: Ribosomal RNA small subunit methyltransferase A (294 aa).

Asn-31, Leu-33, Gly-58, Glu-79, Asp-111, and Asn-136 together coordinate S-adenosyl-L-methionine.

The protein belongs to the class I-like SAM-binding methyltransferase superfamily. rRNA adenine N(6)-methyltransferase family. RsmA subfamily.

The protein localises to the cytoplasm. The enzyme catalyses adenosine(1518)/adenosine(1519) in 16S rRNA + 4 S-adenosyl-L-methionine = N(6)-dimethyladenosine(1518)/N(6)-dimethyladenosine(1519) in 16S rRNA + 4 S-adenosyl-L-homocysteine + 4 H(+). In terms of biological role, specifically dimethylates two adjacent adenosines (A1518 and A1519) in the loop of a conserved hairpin near the 3'-end of 16S rRNA in the 30S particle. May play a critical role in biogenesis of 30S subunits. The chain is Ribosomal RNA small subunit methyltransferase A from Lactobacillus acidophilus (strain ATCC 700396 / NCK56 / N2 / NCFM).